A 110-amino-acid chain; its full sequence is Large ribosomal subunit protein uL24 (110 aa).

This sequence belongs to the universal ribosomal protein uL24 family. Part of the 50S ribosomal subunit.

In terms of biological role, one of two assembly initiator proteins, it binds directly to the 5'-end of the 23S rRNA, where it nucleates assembly of the 50S subunit. Its function is as follows. One of the proteins that surrounds the polypeptide exit tunnel on the outside of the subunit. This is Large ribosomal subunit protein uL24 from Ureaplasma parvum serovar 3 (strain ATCC 27815 / 27 / NCTC 11736).